The chain runs to 291 residues: Nucleotide-binding protein Lm4b_02443 (291 aa).

13-20 contributes to the ATP binding site; sequence GMSGAGKT. 63-66 serves as a coordination point for GTP; that stretch reads DLRG.

The protein belongs to the RapZ-like family.

In terms of biological role, displays ATPase and GTPase activities. The sequence is that of Nucleotide-binding protein Lm4b_02443 from Listeria monocytogenes serotype 4b (strain CLIP80459).